The chain runs to 384 residues: S-adenosylmethionine synthase (384 aa).

His-15 is an ATP binding site. Asp-17 contributes to the Mg(2+) binding site. Glu-43 serves as a coordination point for K(+). Residues Glu-56 and Gln-99 each coordinate L-methionine. The interval 99–109 (QSPDINQGVDR) is flexible loop. ATP is bound by residues 164 to 166 (DAK), 231 to 232 (RF), Asp-240, 246 to 247 (RK), Ala-263, and Lys-267. Asp-240 contacts L-methionine. Lys-271 is an L-methionine binding site.

The protein belongs to the AdoMet synthase family. Homotetramer; dimer of dimers. Mg(2+) serves as cofactor. Requires K(+) as cofactor.

Its subcellular location is the cytoplasm. It carries out the reaction L-methionine + ATP + H2O = S-adenosyl-L-methionine + phosphate + diphosphate. It functions in the pathway amino-acid biosynthesis; S-adenosyl-L-methionine biosynthesis; S-adenosyl-L-methionine from L-methionine: step 1/1. Functionally, catalyzes the formation of S-adenosylmethionine (AdoMet) from methionine and ATP. The overall synthetic reaction is composed of two sequential steps, AdoMet formation and the subsequent tripolyphosphate hydrolysis which occurs prior to release of AdoMet from the enzyme. This Shewanella piezotolerans (strain WP3 / JCM 13877) protein is S-adenosylmethionine synthase.